We begin with the raw amino-acid sequence, 139 residues long: Ribulose bisphosphate carboxylase small subunit (139 aa).

The protein belongs to the RuBisCO small chain family. Heterohexadecamer of 8 large and 8 small subunits.

The protein resides in the plastid. It localises to the chloroplast. Its function is as follows. RuBisCO catalyzes two reactions: the carboxylation of D-ribulose 1,5-bisphosphate, the primary event in carbon dioxide fixation, as well as the oxidative fragmentation of the pentose substrate in the photorespiration process. Both reactions occur simultaneously and in competition at the same active site. Although the small subunit is not catalytic it is essential for maximal activity. The protein is Ribulose bisphosphate carboxylase small subunit of Guillardia theta (Cryptophyte).